Reading from the N-terminus, the 289-residue chain is Ribosomal RNA small subunit methyltransferase A (289 aa).

Positions 28, 30, 55, 77, 103, and 122 each coordinate S-adenosyl-L-methionine.

It belongs to the class I-like SAM-binding methyltransferase superfamily. rRNA adenine N(6)-methyltransferase family. RsmA subfamily.

It is found in the cytoplasm. The enzyme catalyses adenosine(1518)/adenosine(1519) in 16S rRNA + 4 S-adenosyl-L-methionine = N(6)-dimethyladenosine(1518)/N(6)-dimethyladenosine(1519) in 16S rRNA + 4 S-adenosyl-L-homocysteine + 4 H(+). Its function is as follows. Specifically dimethylates two adjacent adenosines (A1518 and A1519) in the loop of a conserved hairpin near the 3'-end of 16S rRNA in the 30S particle. May play a critical role in biogenesis of 30S subunits. This is Ribosomal RNA small subunit methyltransferase A from Jannaschia sp. (strain CCS1).